The following is a 500-amino-acid chain: Lysine--tRNA ligase (500 aa).

Mg(2+) contacts are provided by E410 and E417.

The protein belongs to the class-II aminoacyl-tRNA synthetase family. Homodimer. The cofactor is Mg(2+).

It is found in the cytoplasm. It catalyses the reaction tRNA(Lys) + L-lysine + ATP = L-lysyl-tRNA(Lys) + AMP + diphosphate. The polypeptide is Lysine--tRNA ligase (Mycoplasma capricolum subsp. capricolum (strain California kid / ATCC 27343 / NCTC 10154)).